We begin with the raw amino-acid sequence, 335 residues long: DNA-directed RNA polymerase subunit alpha (335 aa).

The alpha N-terminal domain (alpha-NTD) stretch occupies residues 1 to 248; sequence MTIQTSRTLS…GLFAPLQEVS (248 aa). The tract at residues 256–335 is alpha C-terminal domain (alpha-CTD); it reads KPDEDNQKNQ…LPRTREKGKA (80 aa).

The protein belongs to the RNA polymerase alpha chain family. As to quaternary structure, in cyanobacteria the RNAP catalytic core is composed of 2 alpha, 1 beta, 1 beta', 1 gamma and 1 omega subunit. When a sigma factor is associated with the core the holoenzyme is formed, which can initiate transcription.

The catalysed reaction is RNA(n) + a ribonucleoside 5'-triphosphate = RNA(n+1) + diphosphate. Its function is as follows. DNA-dependent RNA polymerase catalyzes the transcription of DNA into RNA using the four ribonucleoside triphosphates as substrates. This is DNA-directed RNA polymerase subunit alpha from Synechococcus sp. (strain JA-2-3B'a(2-13)) (Cyanobacteria bacterium Yellowstone B-Prime).